Reading from the N-terminus, the 273-residue chain is Hemin import ATP-binding protein HmuV (273 aa).

The 255-residue stretch at 2-256 (LTAHHLDVAR…AHIAQCYGFA (255 aa)) folds into the ABC transporter domain. Position 34–41 (34–41 (GRNGAGKS)) interacts with ATP.

This sequence belongs to the ABC transporter superfamily. Heme (hemin) importer (TC 3.A.1.14.5) family. As to quaternary structure, the complex is composed of two ATP-binding proteins (HmuV), two transmembrane proteins (HmuU) and a solute-binding protein (HmuT).

Its subcellular location is the cell inner membrane. Functionally, part of the ABC transporter complex HmuTUV involved in hemin import. Responsible for energy coupling to the transport system. In Burkholderia ambifaria (strain ATCC BAA-244 / DSM 16087 / CCUG 44356 / LMG 19182 / AMMD) (Burkholderia cepacia (strain AMMD)), this protein is Hemin import ATP-binding protein HmuV.